The chain runs to 148 residues: Putative nickel-responsive regulator (148 aa).

Residues histidine 88, histidine 99, histidine 101, and cysteine 107 each contribute to the Ni(2+) site.

This sequence belongs to the transcriptional regulatory CopG/NikR family. As to quaternary structure, homotetramer. Ni(2+) is required as a cofactor.

In terms of biological role, transcriptional regulator. This is Putative nickel-responsive regulator from Helicobacter pylori (strain J99 / ATCC 700824) (Campylobacter pylori J99).